We begin with the raw amino-acid sequence, 295 residues long: tRNA-cytidine(32) 2-sulfurtransferase (295 aa).

The PP-loop motif motif lies at 63 to 68; it reads SGGKDS. Residues Cys138, Cys141, and Cys229 each coordinate [4Fe-4S] cluster.

Belongs to the TtcA family. In terms of assembly, homodimer. Mg(2+) is required as a cofactor. The cofactor is [4Fe-4S] cluster.

Its subcellular location is the cytoplasm. It catalyses the reaction cytidine(32) in tRNA + S-sulfanyl-L-cysteinyl-[cysteine desulfurase] + AH2 + ATP = 2-thiocytidine(32) in tRNA + L-cysteinyl-[cysteine desulfurase] + A + AMP + diphosphate + H(+). Its pathway is tRNA modification. In terms of biological role, catalyzes the ATP-dependent 2-thiolation of cytidine in position 32 of tRNA, to form 2-thiocytidine (s(2)C32). The sulfur atoms are provided by the cysteine/cysteine desulfurase (IscS) system. The sequence is that of tRNA-cytidine(32) 2-sulfurtransferase from Mesorhizobium japonicum (strain LMG 29417 / CECT 9101 / MAFF 303099) (Mesorhizobium loti (strain MAFF 303099)).